The chain runs to 202 residues: MFSSKRYLNSFGWEEGNALKEGGLTKPILTSRKYNTHGLGAKHDIADQWWDNVFSAQLQSIQVNTDNGKVAVQSNGVSTKLRMAKYHSKYSALSSVFRYAGRLCGTFEEDLVDKSLDSSVSPVSSKKVKVRKTSGKESSKREKSKKKKEKKEKKDKLKKKSKRLKLDDSHTQKRKRKVRDKESKKSSKSGLKKVSGTKKVKA.

The segment at 118-202 is disordered; it reads SSVSPVSSKK…KVSGTKKVKA (85 aa). S121 is modified (phosphoserine). Basic residues-rich tracts occupy residues 142–163 and 186–202; these read EKSK…KSKR and SSKS…KVKA.

It localises to the nucleus. It is found in the nucleolus. This is an uncharacterized protein from Schizosaccharomyces pombe (strain 972 / ATCC 24843) (Fission yeast).